Consider the following 275-residue polypeptide: Coagulation factor IX (275 aa).

Tyrosine 23 is subject to Sulfotyrosine. N-linked (GlcNAc...) asparagine glycosylation is present at asparagine 25. A Phosphothreonine modification is found at threonine 27. An N-linked (GlcNAc...) asparagine glycan is attached at asparagine 35. O-linked (GalNAc...) threonine glycosylation occurs at threonine 47. One can recognise a Peptidase S1 domain in the interval isoleucine 49–tryptophan 275. An intrachain disulfide couples cysteine 74 to cysteine 90. Catalysis depends on histidine 89, which acts as the Charge relay system. N-linked (GlcNAc...) asparagine glycosylation is present at asparagine 96. 5 residues coordinate Ca(2+): glutamate 103, asparagine 105, glutamate 108, glutamate 110, and glutamate 113. Asparagine 128 carries N-linked (GlcNAc...) asparagine glycosylation. Residue aspartate 137 is the Charge relay system of the active site. Intrachain disulfides connect cysteine 204–cysteine 218 and cysteine 229–cysteine 257. The active-site Charge relay system is serine 233.

Belongs to the peptidase S1 family. In terms of assembly, heterodimer of a light chain and a heavy chain; disulfide-linked. Interacts (inactive and activated) with F11 (activated) in calcium-dependent manner. Interacts with SERPINC1. In terms of processing, activated by factor XIa, which excises the activation peptide. The propeptide can also be removed by snake venom protease. Activated by coagulation factor VIIa-tissue factor (F7-F3) complex in calcium-dependent manner.

Its subcellular location is the secreted. It carries out the reaction Selective cleavage of Arg-|-Ile bond in factor X to form factor Xa.. Functionally, factor IX is a vitamin K-dependent plasma protein that participates in the intrinsic pathway of blood coagulation by converting factor X to its active form in the presence of Ca(2+) ions, phospholipids, and factor VIIIa. This Oryctolagus cuniculus (Rabbit) protein is Coagulation factor IX (F9).